A 681-amino-acid chain; its full sequence is DNA-directed RNA polymerase subunit beta' (681 aa).

Zn(2+)-binding residues include cysteine 69, cysteine 71, cysteine 87, and cysteine 90. Positions 489, 491, and 493 each coordinate Mg(2+).

It belongs to the RNA polymerase beta' chain family. RpoC1 subfamily. As to quaternary structure, in plastids the minimal PEP RNA polymerase catalytic core is composed of four subunits: alpha, beta, beta', and beta''. When a (nuclear-encoded) sigma factor is associated with the core the holoenzyme is formed, which can initiate transcription. It depends on Mg(2+) as a cofactor. Zn(2+) serves as cofactor.

Its subcellular location is the plastid. The protein localises to the chloroplast. The catalysed reaction is RNA(n) + a ribonucleoside 5'-triphosphate = RNA(n+1) + diphosphate. Functionally, DNA-dependent RNA polymerase catalyzes the transcription of DNA into RNA using the four ribonucleoside triphosphates as substrates. In Atropa belladonna (Belladonna), this protein is DNA-directed RNA polymerase subunit beta'.